Here is a 34-residue protein sequence, read N- to C-terminus: Potassium channel toxin alpha-KTx 6.2 (34 aa).

Disulfide bonds link Cys3-Cys24, Cys9-Cys29, Cys13-Cys19, and Cys31-Cys34. Cys34 is modified (cysteine amide).

Belongs to the short scorpion toxin superfamily. Potassium channel inhibitor family. Alpha-KTx 06 subfamily. In terms of tissue distribution, expressed by the venom gland.

It is found in the secreted. Functionally, blocks voltage-gated potassium channels Kv1.2/KCNA2 (IC(50)=0.12-0.8 nM), KCa3.1/KCNN4 (IC(50)=1-2.2 nM), Shaker B (IC(50)=2.39-80 nM), Kv1.1/KCNA1 (IC(50)=37-45 or no activity, depending on the study), Kv1.3/KCNA3 (IC(50)=150-180 or no activity, depending on the study). This Scorpio palmatus (Israeli golden scorpion) protein is Potassium channel toxin alpha-KTx 6.2.